A 400-amino-acid chain; its full sequence is Acetyl-CoA decarbonylase/synthase complex subunit delta (400 aa).

Belongs to the CdhD family. In terms of assembly, heterodimer of delta and gamma chains. The ACDS complex is made up of alpha, epsilon, beta, gamma and delta chains with a probable stoichiometry of (alpha(2)epsilon(2))(4)-beta(8)-(gamma(1)delta(1))(8).

Part of a complex that catalyzes the reversible cleavage of acetyl-CoA, allowing autotrophic growth from CO(2). Probably maintains the overall quaternary structure of the ACDS complex. The chain is Acetyl-CoA decarbonylase/synthase complex subunit delta from Methanopyrus kandleri (strain AV19 / DSM 6324 / JCM 9639 / NBRC 100938).